The sequence spans 239 residues: DnaA regulatory inactivator Hda (239 aa).

Belongs to the DnaA family. HdA subfamily. The active form seems to be an ADP-bound monomer. Forms the RIDA complex (regulatory inactivation of DnaA) of ATP-DnaA, ADP-Hda and the DNA-loaded beta sliding clamp (dnaN).

Functionally, mediates the interaction of DNA replication initiator protein DnaA with DNA polymerase subunit beta sliding clamp (dnaN). Stimulates hydrolysis of ATP-DnaA to ADP-DnaA, rendering DnaA inactive for reinitiation, a process called regulatory inhibition of DnaA or RIDA. This chain is DnaA regulatory inactivator Hda, found in Yersinia pseudotuberculosis serotype O:1b (strain IP 31758).